Consider the following 522-residue polypeptide: Peptide chain release factor 3 (522 aa).

A tr-type G domain is found at 10 to 277 (ASRKTFAIIS…TFVDFAPSPS (268 aa)). GTP is bound by residues 19-26 (SHPDAGKT), 87-91 (DTPGH), and 141-144 (NKMD).

Belongs to the TRAFAC class translation factor GTPase superfamily. Classic translation factor GTPase family. PrfC subfamily.

The protein resides in the cytoplasm. Increases the formation of ribosomal termination complexes and stimulates activities of RF-1 and RF-2. It binds guanine nucleotides and has strong preference for UGA stop codons. It may interact directly with the ribosome. The stimulation of RF-1 and RF-2 is significantly reduced by GTP and GDP, but not by GMP. In Listeria monocytogenes serotype 4b (strain CLIP80459), this protein is Peptide chain release factor 3.